Reading from the N-terminus, the 229-residue chain is Deoxyribose-phosphate aldolase (229 aa).

D96 acts as the Proton donor/acceptor in catalysis. The Schiff-base intermediate with acetaldehyde role is filled by K166. K195 acts as the Proton donor/acceptor in catalysis.

Belongs to the DeoC/FbaB aldolase family. DeoC type 1 subfamily.

The protein resides in the cytoplasm. The catalysed reaction is 2-deoxy-D-ribose 5-phosphate = D-glyceraldehyde 3-phosphate + acetaldehyde. The protein operates within carbohydrate degradation; 2-deoxy-D-ribose 1-phosphate degradation; D-glyceraldehyde 3-phosphate and acetaldehyde from 2-deoxy-alpha-D-ribose 1-phosphate: step 2/2. Catalyzes a reversible aldol reaction between acetaldehyde and D-glyceraldehyde 3-phosphate to generate 2-deoxy-D-ribose 5-phosphate. This Micrococcus luteus (strain ATCC 4698 / DSM 20030 / JCM 1464 / CCM 169 / CCUG 5858 / IAM 1056 / NBRC 3333 / NCIMB 9278 / NCTC 2665 / VKM Ac-2230) (Micrococcus lysodeikticus) protein is Deoxyribose-phosphate aldolase.